Consider the following 192-residue polypeptide: 7-methyl-GTP pyrophosphatase (192 aa).

The active-site Proton acceptor is the D70.

The protein belongs to the Maf family. YceF subfamily. A divalent metal cation is required as a cofactor.

The protein localises to the cytoplasm. The catalysed reaction is N(7)-methyl-GTP + H2O = N(7)-methyl-GMP + diphosphate + H(+). Functionally, nucleoside triphosphate pyrophosphatase that hydrolyzes 7-methyl-GTP (m(7)GTP). May have a dual role in cell division arrest and in preventing the incorporation of modified nucleotides into cellular nucleic acids. This Xanthomonas campestris pv. campestris (strain 8004) protein is 7-methyl-GTP pyrophosphatase.